Reading from the N-terminus, the 196-residue chain is SAGA-associated factor 11 homolog (196 aa).

The segment at 1 to 22 is disordered; sequence MSAANMPTTTGAQGSGNQVPTT. An SGF11-type zinc finger spans residues 106–127; the sequence is CTCPNCDRLVAAARFAPHLEKC. The tract at residues 141–196 is disordered; it reads RLATKEGATSAHLHSSGNTGGTDDEDDVDWSSDKRRKKSNQNSRNNGSKKNNGKTF. The residue at position 172 (Ser-172) is a Phosphoserine. Residues 180–196 show a composition bias toward low complexity; it reads NQNSRNNGSKKNNGKTF.

The protein belongs to the SGF11 family. In terms of assembly, component of some SAGA transcription coactivator-HAT complexes, at least composed of Ada2b, not/nonstop, Pcaf/Gcn5, Sgf11 and Spt3. Within the SAGA complex, Sgf11, e(y)2, and not/nonstop form an additional subcomplex of SAGA called the DUB module (deubiquitination module). Interacts directly with not/nonstop. Interacts with the AMEX complex component xmas-2. Interacts with Cbp80; important for promoter recruitment of Sgf11 that is not associated with the DUB module.

Its subcellular location is the nucleus. The protein localises to the nucleoplasm. The protein resides in the cytoplasm. Its function is as follows. Component of the transcription regulatory histone acetylation (HAT) complex SAGA, a multiprotein complex that activates transcription by remodeling chromatin and mediating histone acetylation and deubiquitination. Within the SAGA complex, participates in a subcomplex that specifically deubiquitinates histone H2B. The SAGA complex is recruited to specific gene promoters by activators, where it is required for transcription. Required for nuclear receptor-mediated transactivation. Binds independently on SAGA to promoters in an RNA-dependent manner. Binds to mRNA and is essential for total mRNA export from the nucleus. Required to counteract heterochromatin silencing. Controls the development of neuronal connectivity in visual system by being required for accurate axon targeting in the optic lobe. Required for expression of ecdysone-induced genes such as br/broad. This Drosophila simulans (Fruit fly) protein is SAGA-associated factor 11 homolog.